We begin with the raw amino-acid sequence, 207 residues long: Thaumatin-like protein 1 (207 aa).

Disulfide bonds link C9–C202, C50–C60, C65–C71, C117–C191, C122–C174, C130–C140, C144–C153, and C154–C161.

This sequence belongs to the thaumatin family. As to quaternary structure, monomer. In terms of processing, not glycosylated.

The protein resides in the secreted. Functionally, acidic thaumatin-like protein. Exhibits weak beta-1,3-glucanase activity with laminarin as substrate. The polypeptide is Thaumatin-like protein 1 (TLP1) (Manilkara zapota (Sapodilla plum)).